The following is a 192-amino-acid chain: Early nodulin-like protein 7 (192 aa).

Positions 1–27 (MMMMMMRSTCNLTLMLCICALVVASMA) are cleaved as a signal peptide. The region spanning 32 to 134 (RDFKVGDEFG…GQRLIVEVMH (103 aa)) is the Phytocyanin domain. N-linked (GlcNAc...) asparagine glycosylation is found at Asn48, Asn89, and Asn101. Cys88 and Cys122 form a disulfide bridge. Ser166 carries GPI-anchor amidated serine lipidation. Positions 167 to 192 (AASSLPTACLLIPLFLTIASFRFISY) are cleaved as a propeptide — removed in mature form.

It belongs to the early nodulin-like (ENODL) family. In terms of tissue distribution, mostly expressed in flowers, and, to a lower extent, in seeds, but barely in seedlings, stems, leaves and roots.

The protein resides in the cell membrane. Its function is as follows. May act as a carbohydrate transporter. The protein is Early nodulin-like protein 7 of Arabidopsis thaliana (Mouse-ear cress).